We begin with the raw amino-acid sequence, 450 residues long: 23S rRNA (uracil(1939)-C(5))-methyltransferase RlmD (450 aa).

The 59-residue stretch at 15–73 (KAVPAKNLTVTVASLDPFGQGVARHEGKTVFVTGVLPGEQAEVQLTEEKRQFSHAKLKR) folds into the TRAM domain. Cys-86, Cys-92, Cys-95, and Cys-173 together coordinate [4Fe-4S] cluster. S-adenosyl-L-methionine-binding residues include Gln-276, Phe-305, Asn-310, Glu-326, Asn-353, and Asp-374. The active-site Nucleophile is Cys-400.

This sequence belongs to the class I-like SAM-binding methyltransferase superfamily. RNA M5U methyltransferase family. RlmD subfamily.

The catalysed reaction is uridine(1939) in 23S rRNA + S-adenosyl-L-methionine = 5-methyluridine(1939) in 23S rRNA + S-adenosyl-L-homocysteine + H(+). In terms of biological role, catalyzes the formation of 5-methyl-uridine at position 1939 (m5U1939) in 23S rRNA. This Pectobacterium atrosepticum (strain SCRI 1043 / ATCC BAA-672) (Erwinia carotovora subsp. atroseptica) protein is 23S rRNA (uracil(1939)-C(5))-methyltransferase RlmD.